A 900-amino-acid chain; its full sequence is MRTSLVVCLFWLLFQLHTTHGYNTLVNLAGNWEFSSSNKTVNGTGTVPGDIYSDLYASGIIDNPLFGENHLNLKWIAEDDWTYSRKFRLIDLDDTVGAFLEIESVDTIATVYVNGQKVLHSRNQFLPYHVNVTDIIALGENDITIKFKSSVKYAEKRADEYKKIFGHSLPPDCNPDIYHGECHQNFIRKAQYSFAWDWGPSFPTVGIPSTITINIYRGQYFHDFNWKTRFAHGKWKVAFEFDTFHYGARTIEYSVQIPELGIKESDYYRLSATKSLQTRSKNIMSLSIPMEHEPERWWPNGMGEQKLYDVVVSMGGQVKEKKIGFKTVELVQDLIDPKKPEKGRNFYFKINDEPVFLKGTNWIPVSMFRSDRENIAKTEFLLDSVAEVGMNAIRVWGGGFYESNHFYYYASKKGILVWQDLMFACALYPTTEEFIQNAEEEVSYNVDRISQHTSVIVFSGNNENEAAIRGHWWKASNYTESQQVKDYVLLYQRLAKIAKKVAPTIPFIMSSPSNGVETEEEGGVSKNPYDVRYGDIHYYNEFVNLWRDDTYLTPRCASEYGVQSYPMKETMLNWINESDWEYTSKAMFHRQHHPGGIATNLLMIFQHLPIPAECGSKSVSDVPSCKYISSASYMSRLAYFSQVHQSIALKTQTLHYRRFRNTTTNEGLGNTMCAMYWQLNDVWAAPTWSTIDFEQNWKMAHYEARRFFSNVAVYSFADETDFNLKVFLLNDNPYLLHNITVNVQMLSWGNGLDPILTNEFHIDSVPAGSSEVLKTGITFSKITELSEYLYVSTLYDSSGVKIHEDVLVPDFLFEVDFNTFGDVQISDVQRIDEKTYDLTITTDRVSPFTWITCKKPFTGWFSDNGFHMIQRLRKIRLIAKFEVDLEKSDFTVCNLKNCYV.

Positions 1–21 are cleaved as a signal peptide; it reads MRTSLVVCLFWLLFQLHTTHG. Residues Asn-38, Asn-42, and Asn-131 are each glycosylated (N-linked (GlcNAc...) asparagine). Catalysis depends on Glu-463, which acts as the Proton donor. N-linked (GlcNAc...) asparagine glycosylation is found at Asn-477, Asn-576, Asn-661, and Asn-738.

Belongs to the glycosyl hydrolase 2 family.

The protein resides in the lysosome. It carries out the reaction Hydrolysis of terminal, non-reducing beta-D-mannose residues in beta-D-mannosides.. The protein is Probable beta-mannosidase of Caenorhabditis elegans.